The primary structure comprises 78 residues: Delta-conotoxin-like TxMKLT1-0111 (78 aa).

The signal sequence occupies residues 1 to 22 (MKLTCMMIVAVLFLTAWTFATA). Residues 23-49 (DDSGNGLENLFSNAHHQMKNPEASKLN) constitute a propeptide that is removed on maturation. 3 cysteine pairs are disulfide-bonded: C53–C68, C60–C72, and C67–C77.

Belongs to the conotoxin O1 superfamily. Expressed by the venom duct.

It localises to the secreted. Delta-conotoxins bind to site 6 of voltage-gated sodium channels (Nav) and inhibit the inactivation process. The polypeptide is Delta-conotoxin-like TxMKLT1-0111 (Conus textile (Cloth-of-gold cone)).